A 213-amino-acid chain; its full sequence is MERSRSPRETGSTSSRDKSDADWSERRREERTRTWKSRSPIRAHGERSWGSWRSREKNQSSSTASRPYQKATRKETATKKTKHTPFNVFSAHRALSKTDLQFCGFYWHSTRLASKGTNEIFNGLKQSFQSKAIDGKLDWEGVGELLFEQKKCLDTWYRNMMYHFALGGDCEKCNYWDDVYKKHLANVDTYSVAEEITDSEMLEAAEAVDAANQ.

Positions 1 to 80 are disordered; sequence MERSRSPRET…ATRKETATKK (80 aa). Basic and acidic residues-rich tracts occupy residues 15-33 and 43-58; these read SRDK…ERTR and AHGE…REKN.

The protein belongs to the Bocaparvovirus Non-structural protein NP-1 family.

It is found in the host nucleus. In terms of biological role, required for the expression of the capsid proteins. Performs the splicing and internal polyadenylation of the viral capsid-encoding mRNA precursor, which allows its maturation and expression. Transactivates the viral promoter. This chain is Non-structural protein NP-1 (NP1), found in Bos taurus (Bovine).